The chain runs to 215 residues: Ras-related protein Rab-42 (215 aa).

GTP is bound by residues glycine 19, glycine 21, lysine 22, threonine 23, and threonine 44. Residues threonine 23, threonine 44, and aspartate 68 each contribute to the Mg(2+) site. Positions 71, 128, 130, 157, and 158 each coordinate GTP. Positions 196–215 (HRSPNPRSSSRKQDSGTCQC) are disordered. Residues cysteine 213 and cysteine 215 are each lipidated (S-geranylgeranyl cysteine).

It belongs to the small GTPase superfamily. Rab family. The cofactor is Mg(2+).

It is found in the membrane. It catalyses the reaction GTP + H2O = GDP + phosphate + H(+). Regulated by guanine nucleotide exchange factors (GEFs) which promote the exchange of bound GDP for free GTP. Regulated by GTPase activating proteins (GAPs) which increase the GTP hydrolysis activity. Inhibited by GDP dissociation inhibitors (GDIs). In terms of biological role, the small GTPases Rab are key regulators of intracellular membrane trafficking, from the formation of transport vesicles to their fusion with membranes. Rabs cycle between an inactive GDP-bound form and an active GTP-bound form that is able to recruit to membranes different sets of downstream effectors directly responsible for vesicle formation, movement, tethering and fusion. The physiological function of RAB42 remains undefined. The chain is Ras-related protein Rab-42 from Mus musculus (Mouse).